Reading from the N-terminus, the 119-residue chain is MRTIENSLLVFNQGEDEQPGRHEGVSVAPEKPALKRPARYRVVLLNDDYTPMDFVVDVLMKFFAMNEEKATQVMLLVHTQGKAVCGVYTRDIAETKAAQVNQYSSECEHPLLCEIERAD.

It belongs to the ClpS family. Binds to the N-terminal domain of the chaperone ClpA.

Involved in the modulation of the specificity of the ClpAP-mediated ATP-dependent protein degradation. This chain is ATP-dependent Clp protease adapter protein ClpS, found in Marinobacter nauticus (strain ATCC 700491 / DSM 11845 / VT8) (Marinobacter aquaeolei).